A 500-amino-acid polypeptide reads, in one-letter code: ERAD-associated E3 ubiquitin-protein ligase HRD1 (500 aa).

At 1-3 (MIR) the chain is on the cytoplasmic side. Residues 4-24 (LQTYAAFSLMATATAVYYAFS) form a helical membrane-spanning segment. Residues 25 to 40 (SREQFYPAMVYLSTSK) are Lumenal-facing. Residues 41–61 (ICFVLLLNTGLVAMCVAWQLV) form a helical membrane-spanning segment. Over 62-98 (KRLFLGTLREAEVERLNEQAWREVVEILFAVTIFRQD) the chain is Cytoplasmic. Residues 99–119 (FSVSFLAMVAALLLVKALHWL) traverse the membrane as a helical segment. Residues 120-135 (AQKRVEYIETTPSVPM) are Lumenal-facing. A helical transmembrane segment spans residues 136-156 (LSHARIVSFMLFLLVVDCLFL). Residues 157 to 170 (SNSLRSLIHKREAS) are Cytoplasmic-facing. Residues 171 to 191 (VAIFFSFEYMILATSTVSTFV) form a helical membrane-spanning segment. The Lumenal segment spans residues 192–225 (KYIFYVSDMLMEGQWEKKAVYTFYLELISDLVHL). Residues 226 to 246 (SLYMLFFIAIFLNYGVPLHLI) form a helical membrane-spanning segment. Residues 247–500 (RELYETFRNF…NENGEHTKSD (254 aa)) lie on the Cytoplasmic side of the membrane. The RING-type; atypical zinc-finger motif lies at 292-330 (CIICREEMTTAKKLLCGHLFHVHCLRSWLERQHTCPTCR). 2 disordered regions span residues 337–375 (DNGRTAARPHGVHPGVQPVPGNGTPGSERAAGENISRRQ) and 398–438 (NNLN…SAPT). Over residues 348–358 (VHPGVQPVPGN) the composition is skewed to low complexity. Over residues 398-426 (NNLNRYSTPPQSTSNGPQSGEASTSNQSP) the composition is skewed to polar residues.

It belongs to the HRD1 family.

The protein resides in the endoplasmic reticulum membrane. It carries out the reaction S-ubiquitinyl-[E2 ubiquitin-conjugating enzyme]-L-cysteine + [acceptor protein]-L-lysine = [E2 ubiquitin-conjugating enzyme]-L-cysteine + N(6)-ubiquitinyl-[acceptor protein]-L-lysine.. Its pathway is protein modification; protein ubiquitination. Probable component of the HRD1 ubiquitin ligase complex that mediates the rapid degradation of misfolded endoplasmic reticulum (ER) proteins, a process called ER-associated degradation (ERAD). This is ERAD-associated E3 ubiquitin-protein ligase HRD1 from Oryza sativa subsp. japonica (Rice).